A 369-amino-acid polypeptide reads, in one-letter code: MKFIDEARIEVIAGDGGDGSASMRREKFVPFGGPDGGDGGRGGSVYAIADRNINTLIDYRYAKKHLARNGENGRGSDCYGKGGDDITLRMPVGTVITDMDTGELIADLTEHDQQVLLAKGGAGGLGNLHFKSSTNRAPRQKTDGKPGERRMLKLELKVLADVGLLGMPNAGKSTFISSVSNAKPKIADYPFTTLAPNLGVVRVGPSKSFVIADIPGLIEGAAEGAGLGHQFLRHLQRTGLLLHLVDIAPFDEGVDPVAEATAIVGELRKYDEALYEKPRWLVLNKLDMVPEDERAARVADFLERFDWHGPVFEISALTGQGCEALCYAIYDYLAEHSDAHRAAEAEDLAADVRFRDAPPAANAAPGDDA.

The region spanning 1–159 (MKFIDEARIE…RMLKLELKVL (159 aa)) is the Obg domain. Positions 128 to 147 (LHFKSSTNRAPRQKTDGKPG) are disordered. The OBG-type G domain occupies 160–334 (ADVGLLGMPN…LCYAIYDYLA (175 aa)). GTP contacts are provided by residues 166–173 (GMPNAGKS), 191–195 (FTTLA), 213–216 (DIPG), 284–287 (NKLD), and 315–317 (SAL). Mg(2+) is bound by residues Ser173 and Thr193.

This sequence belongs to the TRAFAC class OBG-HflX-like GTPase superfamily. OBG GTPase family. Monomer. It depends on Mg(2+) as a cofactor.

It localises to the cytoplasm. Functionally, an essential GTPase which binds GTP, GDP and possibly (p)ppGpp with moderate affinity, with high nucleotide exchange rates and a fairly low GTP hydrolysis rate. Plays a role in control of the cell cycle, stress response, ribosome biogenesis and in those bacteria that undergo differentiation, in morphogenesis control. This is GTPase Obg from Burkholderia multivorans (strain ATCC 17616 / 249).